Reading from the N-terminus, the 403-residue chain is Aspartic endopeptidase PEP1 (403 aa).

A signal peptide spans 1 to 20 (MVQISQIGAVLAVCSTLTVA). Positions 21–67 (APTKGKARFNVPQVAVPMKAVHHPAVAYARALHKFGMKVPKAVSDAA) are cleaved as a propeptide — activation peptide. Residues 82–400 (YVTQVTVGQG…DTEGPRIGFA (319 aa)) enclose the Peptidase A1 domain. Aspartate 98 is an active-site residue. Residues asparagine 159 and asparagine 270 are each glycosylated (N-linked (GlcNAc...) asparagine). Aspartate 293 is an active-site residue. Cysteines 329 and 361 form a disulfide.

The protein belongs to the peptidase A1 family.

Its subcellular location is the secreted. The catalysed reaction is Hydrolysis of proteins with broad specificity. Generally favors hydrophobic residues in P1 and P1', but also accepts Lys in P1, which leads to activation of trypsinogen. Does not clot milk.. Secreted aspartic endopeptidase that allows assimilation of proteinaceous substrates. Can catalyze hydrolysis of the major structural proteins of basement membrane, elastin, collagen, and laminin. Thought to play a significant role in virulence. In terms of biological role, can catalyze hydrolysis of the major structural proteins of basement membrane, elastin, collagen, and laminin. Thought to play a significant role in virulence. In Trichophyton verrucosum (strain HKI 0517), this protein is Aspartic endopeptidase PEP1 (PEP1).